The following is a 102-amino-acid chain: Small ribosomal subunit protein bS6 (102 aa).

Belongs to the bacterial ribosomal protein bS6 family.

In terms of biological role, binds together with bS18 to 16S ribosomal RNA. The polypeptide is Small ribosomal subunit protein bS6 (Solidesulfovibrio magneticus (strain ATCC 700980 / DSM 13731 / RS-1) (Desulfovibrio magneticus)).